Reading from the N-terminus, the 219-residue chain is PRELI domain-containing protein 1, mitochondrial (219 aa).

The PRELI/MSF1 domain occupies 36–174 (TEDIVHREVT…ILAKLQGEAP (139 aa)).

As to quaternary structure, forms a complex with TRIAP1 in the mitochondrion intermembrane space. Interacts with OPA1 and AIFM1.

It is found in the mitochondrion. The protein localises to the mitochondrion intermembrane space. The catalysed reaction is a 1,2-diacyl-sn-glycero-3-phosphate(in) = a 1,2-diacyl-sn-glycero-3-phosphate(out). Functionally, involved in the modulation of the mitochondrial apoptotic pathway by ensuring the accumulation of cardiolipin (CL) in mitochondrial membranes. In vitro, the TRIAP1:PRELID1 complex mediates the transfer of phosphatidic acid (PA) between liposomes and probably functions as a PA transporter across the mitochondrion intermembrane space to provide PA for CL synthesis in the inner membrane. Regulates the mitochondrial apoptotic pathway in primary Th cells. Regulates Th cell differentiation by down-regulating STAT6 thereby reducing IL-4-induced Th2 cell number. May be important for the development of vital and immunocompetent organs. This chain is PRELI domain-containing protein 1, mitochondrial (PRELID1), found in Bos taurus (Bovine).